The primary structure comprises 379 residues: NADH-quinone oxidoreductase subunit D 2 (379 aa).

This sequence belongs to the complex I 49 kDa subunit family. In terms of assembly, NDH-1 is composed of 14 different subunits. Subunits NuoB, C, D, E, F, and G constitute the peripheral sector of the complex.

The protein resides in the cell inner membrane. It carries out the reaction a quinone + NADH + 5 H(+)(in) = a quinol + NAD(+) + 4 H(+)(out). In terms of biological role, NDH-1 shuttles electrons from NADH, via FMN and iron-sulfur (Fe-S) centers, to quinones in the respiratory chain. The immediate electron acceptor for the enzyme in this species is believed to be ubiquinone. Couples the redox reaction to proton translocation (for every two electrons transferred, four hydrogen ions are translocated across the cytoplasmic membrane), and thus conserves the redox energy in a proton gradient. The sequence is that of NADH-quinone oxidoreductase subunit D 2 from Anaeromyxobacter dehalogenans (strain 2CP-C).